The sequence spans 543 residues: Zinc finger protein 852 (543 aa).

The region spanning 8 to 82 (VAYEDLSEDY…TSGGLFGVVP (75 aa)) is the KRAB domain. Serine 145 is subject to Phosphoserine. 12 consecutive C2H2-type zinc fingers follow at residues 159 to 181 (YRCD…RRIH), 187 to 209 (YECN…LRTH), 215 to 237 (YECS…QRLH), 243 to 265 (YKCN…QRTH), 271 to 293 (YECK…QFLH), 299 to 321 (YKCN…QRTH), 327 to 349 (YKCN…QSLH), 355 to 377 (YKCS…ERIH), 383 to 405 (FKCS…QRLH), 411 to 433 (YKCN…QRIH), 439 to 461 (YECN…QRTH), and 467 to 489 (YKCN…QRVH).

Belongs to the krueppel C2H2-type zinc-finger protein family.

The protein localises to the nucleus. May be involved in transcriptional regulation. The chain is Zinc finger protein 852 (ZNF852) from Homo sapiens (Human).